The following is a 395-amino-acid chain: N5-carboxyaminoimidazole ribonucleotide synthase (395 aa).

Residues K109, K149, E184 to I187, E192, and N268 to E269 each bind ATP. Residues R113 to A298 form the ATP-grasp domain.

It belongs to the PurK/PurT family. Homodimer.

The catalysed reaction is 5-amino-1-(5-phospho-beta-D-ribosyl)imidazole + hydrogencarbonate + ATP = 5-carboxyamino-1-(5-phospho-D-ribosyl)imidazole + ADP + phosphate + 2 H(+). The protein operates within purine metabolism; IMP biosynthesis via de novo pathway; 5-amino-1-(5-phospho-D-ribosyl)imidazole-4-carboxylate from 5-amino-1-(5-phospho-D-ribosyl)imidazole (N5-CAIR route): step 1/2. Its function is as follows. Catalyzes the ATP-dependent conversion of 5-aminoimidazole ribonucleotide (AIR) and HCO(3)(-) to N5-carboxyaminoimidazole ribonucleotide (N5-CAIR). This Synechococcus elongatus (strain ATCC 33912 / PCC 7942 / FACHB-805) (Anacystis nidulans R2) protein is N5-carboxyaminoimidazole ribonucleotide synthase.